The following is a 399-amino-acid chain: MCGVGKVYLDRTEERMYDGEFGETVQQSMEILVALGDIYGAERMVDISSAQVSGVSYKTIGDAGLEYLEDLRARGAGVKVASTLNPAGMDLQRWREMGFSEEFARRQIRIVEAYSAMDVMNTCTCTPYLIGNVPLRGSHVAWSESSAVSYANSVLGARTNREGGPGALAAAICGKTPEYGYHLQENRRATLRVDVECELSGSDYGALGYITGKIAGEGVPYFTFTGHPSADDLKALGAAMASSGAVALYHVDGVTPEYMEASPDEAGDSITVDAGDILEAREELSTTDDDPDLICLGCPHCSLDEIRRIASFLRKNKPACDLWVCTSAAIGSAASRMGYTDVIEAAGGMVVSDTCMVVAPVEDLGYEVLGVDSAKAANYVPGMCGLDAVYDDWMNLIRP.

(R)-5-phosphomevalonate is bound by residues glycine 54, valine 55, serine 56, asparagine 85, and proline 86. Cysteine 125 lines the [4Fe-4S] cluster pocket. (R)-5-phosphomevalonate contacts are provided by glutamate 144 and serine 145. The [4Fe-4S] cluster site is built by cysteine 298 and cysteine 355. Position 375 (lysine 375) interacts with (R)-5-phosphomevalonate.

Belongs to the AcnX type II large subunit family. In terms of assembly, heterodimer composed of a large subunit (PMDh-L) and a small subunit (PMDh-S). [4Fe-4S] cluster is required as a cofactor.

The enzyme catalyses (R)-5-phosphomevalonate = (2E)-3-methyl-5-phosphooxypent-2-enoate + H2O. It participates in isoprenoid biosynthesis; isopentenyl diphosphate biosynthesis via mevalonate pathway. Its function is as follows. Component of a hydro-lyase that catalyzes the dehydration of mevalonate 5-phosphate (MVA5P) to form trans-anhydromevalonate 5-phosphate (tAHMP). Involved in the archaeal mevalonate (MVA) pathway, which provides fundamental precursors for isoprenoid biosynthesis, such as isopentenyl diphosphate (IPP) and dimethylallyl diphosphate (DMAPP). In Methanothermobacter thermautotrophicus (strain ATCC 29096 / DSM 1053 / JCM 10044 / NBRC 100330 / Delta H) (Methanobacterium thermoautotrophicum), this protein is Phosphomevalonate dehydratase large subunit.